The primary structure comprises 264 residues: Ribosomal protein L11 methyltransferase (264 aa).

Residues Thr-116, Gly-137, Asp-159, and Asn-200 each coordinate S-adenosyl-L-methionine.

Belongs to the methyltransferase superfamily. PrmA family.

The protein resides in the cytoplasm. The enzyme catalyses L-lysyl-[protein] + 3 S-adenosyl-L-methionine = N(6),N(6),N(6)-trimethyl-L-lysyl-[protein] + 3 S-adenosyl-L-homocysteine + 3 H(+). Functionally, methylates ribosomal protein L11. The chain is Ribosomal protein L11 methyltransferase from Thermotoga neapolitana (strain ATCC 49049 / DSM 4359 / NBRC 107923 / NS-E).